Reading from the N-terminus, the 263-residue chain is Endonuclease 8 (263 aa).

The active-site Schiff-base intermediate with DNA is the proline 2. Glutamate 3 acts as the Proton donor in catalysis. Lysine 53 (proton donor; for beta-elimination activity) is an active-site residue. DNA contacts are provided by glutamine 70, arginine 125, and asparagine 169. The FPG-type zinc finger occupies 229-263 (KVFHRDGELCERCGGIIEKTTLSSRPFYWCPGCQH). The active-site Proton donor; for delta-elimination activity is the arginine 253.

It belongs to the FPG family. It depends on Zn(2+) as a cofactor.

The enzyme catalyses 2'-deoxyribonucleotide-(2'-deoxyribose 5'-phosphate)-2'-deoxyribonucleotide-DNA = a 3'-end 2'-deoxyribonucleotide-(2,3-dehydro-2,3-deoxyribose 5'-phosphate)-DNA + a 5'-end 5'-phospho-2'-deoxyribonucleoside-DNA + H(+). Functionally, involved in base excision repair of DNA damaged by oxidation or by mutagenic agents. Acts as a DNA glycosylase that recognizes and removes damaged bases. Has a preference for oxidized pyrimidines, such as thymine glycol, 5,6-dihydrouracil and 5,6-dihydrothymine. Has AP (apurinic/apyrimidinic) lyase activity and introduces nicks in the DNA strand. Cleaves the DNA backbone by beta-delta elimination to generate a single-strand break at the site of the removed base with both 3'- and 5'-phosphates. The protein is Endonuclease 8 of Escherichia coli (strain 55989 / EAEC).